The chain runs to 308 residues: Probable GTP 3',8-cyclase (308 aa).

Residues 4 to 224 (RFGRPLEDLR…QIRKKHFRPR (221 aa)) enclose the Radical SAM core domain. Arg13 contacts GTP. 3 residues coordinate [4Fe-4S] cluster: Cys20, Cys24, and Cys27. GTP is bound at residue Lys60. An S-adenosyl-L-methionine-binding site is contributed by Gly64. Position 90 (Thr90) interacts with GTP. Ser114 is an S-adenosyl-L-methionine binding site. A GTP-binding site is contributed by Lys151. [4Fe-4S] cluster-binding residues include Cys245 and Cys248. 250–252 (RIR) contributes to the GTP binding site. Cys262 lines the [4Fe-4S] cluster pocket.

This sequence belongs to the radical SAM superfamily. MoaA family. Requires [4Fe-4S] cluster as cofactor.

The catalysed reaction is GTP + AH2 + S-adenosyl-L-methionine = (8S)-3',8-cyclo-7,8-dihydroguanosine 5'-triphosphate + 5'-deoxyadenosine + L-methionine + A + H(+). Its pathway is cofactor biosynthesis; molybdopterin biosynthesis. Its function is as follows. Catalyzes the cyclization of GTP to (8S)-3',8-cyclo-7,8-dihydroguanosine 5'-triphosphate. In Saccharolobus islandicus (strain M.16.27) (Sulfolobus islandicus), this protein is Probable GTP 3',8-cyclase.